Consider the following 324-residue polypeptide: Beta-ketoacyl-[acyl-carrier-protein] synthase III (324 aa).

Residues Cys-112 and His-249 contribute to the active site. The segment at 250 to 254 (QANDR) is ACP-binding. Asn-279 is a catalytic residue.

Belongs to the thiolase-like superfamily. FabH family. As to quaternary structure, homodimer.

It localises to the cytoplasm. The catalysed reaction is malonyl-[ACP] + acetyl-CoA + H(+) = 3-oxobutanoyl-[ACP] + CO2 + CoA. It functions in the pathway lipid metabolism; fatty acid biosynthesis. Functionally, catalyzes the condensation reaction of fatty acid synthesis by the addition to an acyl acceptor of two carbons from malonyl-ACP. Catalyzes the first condensation reaction which initiates fatty acid synthesis and may therefore play a role in governing the total rate of fatty acid production. Possesses both acetoacetyl-ACP synthase and acetyl transacylase activities. Its substrate specificity determines the biosynthesis of branched-chain and/or straight-chain of fatty acids. The chain is Beta-ketoacyl-[acyl-carrier-protein] synthase III from Streptococcus pneumoniae serotype 19F (strain G54).